The sequence spans 108 residues: Long neurotoxin 13 (108 aa).

Positions 1–21 (MKTLLLTLVVVTIVCLDLAYT) are cleaved as a signal peptide. Intrachain disulfides connect Cys-24/Cys-42, Cys-35/Cys-63, Cys-48/Cys-52, Cys-67/Cys-78, and Cys-79/Cys-84.

This sequence belongs to the three-finger toxin family. Long-chain subfamily. Type II alpha-neurotoxin sub-subfamily. Expressed by the venom gland.

It is found in the secreted. Functionally, binds with high affinity to muscular (alpha-1/CHRNA1) and neuronal (alpha-7/CHRNA7) nicotinic acetylcholine receptor (nAChR) and inhibits acetylcholine from binding to the receptor, thereby impairing neuromuscular and neuronal transmission. The chain is Long neurotoxin 13 from Drysdalia coronoides (White-lipped snake).